The following is a 451-amino-acid chain: Tubulin alpha-1 chain (451 aa).

Position 11 (Q11) interacts with GTP. Position 40 is an N6-acetyllysine (K40). E71, G144, T145, T179, N206, and N228 together coordinate GTP. Mg(2+) is bound at residue E71. E254 is a catalytic residue. The tract at residues Y432–Y451 is disordered.

This sequence belongs to the tubulin family. In terms of assembly, dimer of alpha and beta chains. A typical microtubule is a hollow water-filled tube with an outer diameter of 25 nm and an inner diameter of 15 nM. Alpha-beta heterodimers associate head-to-tail to form protofilaments running lengthwise along the microtubule wall with the beta-tubulin subunit facing the microtubule plus end conferring a structural polarity. Microtubules usually have 13 protofilaments but different protofilament numbers can be found in some organisms and specialized cells. The cofactor is Mg(2+). Post-translationally, undergoes a tyrosination/detyrosination cycle, the cyclic removal and re-addition of a C-terminal tyrosine residue by the enzymes tubulin tyrosine carboxypeptidase (TTCP) and tubulin tyrosine ligase (TTL), respectively. Acetylation of alpha chains at Lys-40 stabilizes microtubules and affects affinity and processivity of microtubule motors. This modification has a role in multiple cellular functions, ranging from cell motility, cell cycle progression or cell differentiation to intracellular trafficking and signaling.

Its subcellular location is the cytoplasm. The protein localises to the cytoskeleton. It carries out the reaction GTP + H2O = GDP + phosphate + H(+). Functionally, tubulin is the major constituent of microtubules, a cylinder consisting of laterally associated linear protofilaments composed of alpha- and beta-tubulin heterodimers. Microtubules grow by the addition of GTP-tubulin dimers to the microtubule end, where a stabilizing cap forms. Below the cap, tubulin dimers are in GDP-bound state, owing to GTPase activity of alpha-tubulin. In Gossypium hirsutum (Upland cotton), this protein is Tubulin alpha-1 chain.